Reading from the N-terminus, the 313-residue chain is Serine/threonine-protein phosphatase PP2A-3 catalytic subunit (313 aa).

Mn(2+) contacts are provided by D61, H63, D89, and N121. The Proton donor role is filled by H122. H171 and H245 together coordinate Mn(2+). The residue at position 313 (L313) is a Leucine methyl ester.

Belongs to the PPP phosphatase family. PP-2A subfamily. In terms of assembly, PP2A consists of a common heterodimeric core enzyme, composed of a 36 kDa catalytic subunit (subunit C) and a 65 kDa constant regulatory subunit (subunit A), that associates with a variety of regulatory subunits such as subunits B (the R2/B/PR55/B55, R3/B''/PR72/PR130/PR59 and R5/B'/B56 families). Interacts with ACR4. Interacts with TAP46. Interacts with SIC/RON3. Mn(2+) is required as a cofactor. In terms of processing, reversibly methyl esterified on Leu-313 by leucine carboxyl methyltransferase 1 (LCMT1) and pectin methylesterase 1 (PME1). Carboxyl methylation influences the affinity of the catalytic subunit for the different regulatory subunits, thereby modulating the PP2A holoenzyme's substrate specificity, enzyme activity and cellular localization. Post-translationally, phosphorylation of either threonine (by autophosphorylation-activated protein kinase) or tyrosine results in inactivation of the phosphatase. Auto-dephosphorylation has been suggested as a mechanism for reactivation.

It is found in the cytoplasm. The catalysed reaction is O-phospho-L-seryl-[protein] + H2O = L-seryl-[protein] + phosphate. The enzyme catalyses O-phospho-L-threonyl-[protein] + H2O = L-threonyl-[protein] + phosphate. Functions redundantly with PP2A4, and is involved in establishing auxin gradients, apical-basal axis of polarity and root and shoot apical meristem during embryogenesis. May dephosphorylate PIN1 and regulate its subcellular distribution for polar auxin transport. Involved in the regulation of formative cell division in roots by dephosphorylating ACR4 protein kinase. The chain is Serine/threonine-protein phosphatase PP2A-3 catalytic subunit from Arabidopsis thaliana (Mouse-ear cress).